The primary structure comprises 120 residues: NAD(P)H-quinone oxidoreductase subunit 3 (120 aa).

The next 3 membrane-spanning stretches (helical) occupy residues 10-30 (FLGF…TNLI), 64-84 (MFAL…PWAV), and 89-109 (LGLL…IALA).

Belongs to the complex I subunit 3 family. NDH-1 can be composed of about 15 different subunits; different subcomplexes with different compositions have been identified which probably have different functions.

It localises to the cellular thylakoid membrane. The enzyme catalyses a plastoquinone + NADH + (n+1) H(+)(in) = a plastoquinol + NAD(+) + n H(+)(out). It catalyses the reaction a plastoquinone + NADPH + (n+1) H(+)(in) = a plastoquinol + NADP(+) + n H(+)(out). In terms of biological role, NDH-1 shuttles electrons from an unknown electron donor, via FMN and iron-sulfur (Fe-S) centers, to quinones in the respiratory and/or the photosynthetic chain. The immediate electron acceptor for the enzyme in this species is believed to be plastoquinone. Couples the redox reaction to proton translocation, and thus conserves the redox energy in a proton gradient. Cyanobacterial NDH-1 also plays a role in inorganic carbon-concentration. This is NAD(P)H-quinone oxidoreductase subunit 3 from Prochlorococcus marinus (strain MIT 9301).